The sequence spans 343 residues: Dipeptide transport system permease protein DppC (343 aa).

The next 5 membrane-spanning stretches (helical) occupy residues 44–64 (LVAMWIIAITLVFSVISAFVV), 144–164 (LIIALAAALIDLVIGVTYGII), 195–215 (LALLLGQGISSIIIAIGLFAW), 259–279 (GVIVVQIMFDIPSMIMYEAVL), and 309–329 (FQLIIPAIVLSVLSLTFIFFG). Positions 140–329 (LRISLIIALA…VLSLTFIFFG (190 aa)) constitute an ABC transmembrane type-1 domain.

This sequence belongs to the binding-protein-dependent transport system permease family. OppBC subfamily. As to quaternary structure, the complex is composed of two ATP-binding proteins (DppD and DppF), two transmembrane proteins (DppB and DppC) and a solute-binding protein (DppA).

Its subcellular location is the cell membrane. Part of the ABC transporter DppABCDF involved in dipeptide transport. Responsible for the translocation of the substrate across the membrane. The sequence is that of Dipeptide transport system permease protein DppC from Lactococcus lactis subsp. cremoris (strain MG1363).